A 298-amino-acid polypeptide reads, in one-letter code: Putative S-adenosyl-L-methionine-dependent methyltransferase MAV_0778 (298 aa).

Residues Asp-124 and 153-154 (DL) contribute to the S-adenosyl-L-methionine site.

Belongs to the UPF0677 family.

In terms of biological role, exhibits S-adenosyl-L-methionine-dependent methyltransferase activity. The protein is Putative S-adenosyl-L-methionine-dependent methyltransferase MAV_0778 of Mycobacterium avium (strain 104).